Here is a 482-residue protein sequence, read N- to C-terminus: Glutamate--tRNA ligase (482 aa).

The 'HIGH' region motif lies at 10-20; it reads PSPTGFLHIGN. The short motif at 253 to 257 is the 'KMSKS' region element; that stretch reads KLSKR. K256 is a binding site for ATP.

This sequence belongs to the class-I aminoacyl-tRNA synthetase family. Glutamate--tRNA ligase type 1 subfamily. Monomer.

It localises to the cytoplasm. It carries out the reaction tRNA(Glu) + L-glutamate + ATP = L-glutamyl-tRNA(Glu) + AMP + diphosphate. Its function is as follows. Catalyzes the attachment of glutamate to tRNA(Glu) in a two-step reaction: glutamate is first activated by ATP to form Glu-AMP and then transferred to the acceptor end of tRNA(Glu). The chain is Glutamate--tRNA ligase from Mesoplasma florum (strain ATCC 33453 / NBRC 100688 / NCTC 11704 / L1) (Acholeplasma florum).